The primary structure comprises 329 residues: Ketol-acid reductoisomerase (NADP(+)) (329 aa).

The KARI N-terminal Rossmann domain occupies 2–182; it reads TQLFYDTDAD…GGTRAGILET (181 aa). NADP(+)-binding positions include 25–28, Ser-51, Ser-53, and 83–86; these read YGSQ and DEFQ. His-108 is an active-site residue. An NADP(+)-binding site is contributed by Gly-134. The KARI C-terminal knotted domain maps to 183-328; sequence NFKEETETDL…KGLRAMFSWL (146 aa). Mg(2+) is bound by residues Asp-191, Glu-195, Glu-227, and Glu-231. Ser-252 contacts substrate.

Belongs to the ketol-acid reductoisomerase family. Mg(2+) serves as cofactor.

It catalyses the reaction (2R)-2,3-dihydroxy-3-methylbutanoate + NADP(+) = (2S)-2-acetolactate + NADPH + H(+). The enzyme catalyses (2R,3R)-2,3-dihydroxy-3-methylpentanoate + NADP(+) = (S)-2-ethyl-2-hydroxy-3-oxobutanoate + NADPH + H(+). It participates in amino-acid biosynthesis; L-isoleucine biosynthesis; L-isoleucine from 2-oxobutanoate: step 2/4. It functions in the pathway amino-acid biosynthesis; L-valine biosynthesis; L-valine from pyruvate: step 2/4. Its function is as follows. Involved in the biosynthesis of branched-chain amino acids (BCAA). Catalyzes an alkyl-migration followed by a ketol-acid reduction of (S)-2-acetolactate (S2AL) to yield (R)-2,3-dihydroxy-isovalerate. In the isomerase reaction, S2AL is rearranged via a Mg-dependent methyl migration to produce 3-hydroxy-3-methyl-2-ketobutyrate (HMKB). In the reductase reaction, this 2-ketoacid undergoes a metal-dependent reduction by NADPH to yield (R)-2,3-dihydroxy-isovalerate. This is Ketol-acid reductoisomerase (NADP(+)) from Prochlorococcus marinus subsp. pastoris (strain CCMP1986 / NIES-2087 / MED4).